The primary structure comprises 59 residues: Large ribosomal subunit protein bL32 (59 aa).

Residues 1 to 59 form a disordered region; it reads MAVQQNRKSRSRRGMRRSHDALSSAALSIDPTTGEKHRRHHVTPDGFYRGKKVVEVSQD. The segment covering 7 to 16 has biased composition (basic residues); sequence RKSRSRRGMR.

This sequence belongs to the bacterial ribosomal protein bL32 family.

This chain is Large ribosomal subunit protein bL32, found in Hahella chejuensis (strain KCTC 2396).